Consider the following 371-residue polypeptide: Queuine tRNA-ribosyltransferase (371 aa).

Catalysis depends on D90, which acts as the Proton acceptor. Residues 90–94 (DSGGF), D144, Q188, and G215 contribute to the substrate site. Positions 246–252 (GVGTPED) are RNA binding. D265 functions as the Nucleophile in the catalytic mechanism. The tract at residues 270 to 274 (TRNAR) is RNA binding; important for wobble base 34 recognition. The Zn(2+) site is built by C303, C305, C308, and H334.

It belongs to the queuine tRNA-ribosyltransferase family. Homodimer. Within each dimer, one monomer is responsible for RNA recognition and catalysis, while the other monomer binds to the replacement base PreQ1. Zn(2+) serves as cofactor.

It catalyses the reaction 7-aminomethyl-7-carbaguanine + guanosine(34) in tRNA = 7-aminomethyl-7-carbaguanosine(34) in tRNA + guanine. The protein operates within tRNA modification; tRNA-queuosine biosynthesis. Catalyzes the base-exchange of a guanine (G) residue with the queuine precursor 7-aminomethyl-7-deazaguanine (PreQ1) at position 34 (anticodon wobble position) in tRNAs with GU(N) anticodons (tRNA-Asp, -Asn, -His and -Tyr). Catalysis occurs through a double-displacement mechanism. The nucleophile active site attacks the C1' of nucleotide 34 to detach the guanine base from the RNA, forming a covalent enzyme-RNA intermediate. The proton acceptor active site deprotonates the incoming PreQ1, allowing a nucleophilic attack on the C1' of the ribose to form the product. After dissociation, two additional enzymatic reactions on the tRNA convert PreQ1 to queuine (Q), resulting in the hypermodified nucleoside queuosine (7-(((4,5-cis-dihydroxy-2-cyclopenten-1-yl)amino)methyl)-7-deazaguanosine). In Chromobacterium violaceum (strain ATCC 12472 / DSM 30191 / JCM 1249 / CCUG 213 / NBRC 12614 / NCIMB 9131 / NCTC 9757 / MK), this protein is Queuine tRNA-ribosyltransferase.